Consider the following 506-residue polypeptide: Aluminum-activated malate transporter 7 (506 aa).

6 helical membrane passes run 28–48 (VGLV…YDSF), 52–72 (AMWA…ATLG), 78–98 (VAAT…ASMS), 104–124 (PILL…VRFF), 130–150 (RYDY…VSGF), and 166–186 (VIIG…VWAG). A disordered region spans residues 461 to 485 (DDGNNDDTSKNDNGSKEVSIHEKHE). Basic and acidic residues predominate over residues 467–485 (DTSKNDNGSKEVSIHEKHE).

Belongs to the aromatic acid exporter (TC 2.A.85) family.

It is found in the membrane. Malate transporter. The polypeptide is Aluminum-activated malate transporter 7 (ALMT7) (Arabidopsis thaliana (Mouse-ear cress)).